The sequence spans 432 residues: Glutamate-1-semialdehyde 2,1-aminomutase (432 aa).

The residue at position 271 (K271) is an N6-(pyridoxal phosphate)lysine.

It belongs to the class-III pyridoxal-phosphate-dependent aminotransferase family. HemL subfamily. Homodimer. It depends on pyridoxal 5'-phosphate as a cofactor.

It localises to the cytoplasm. The catalysed reaction is (S)-4-amino-5-oxopentanoate = 5-aminolevulinate. It functions in the pathway porphyrin-containing compound metabolism; protoporphyrin-IX biosynthesis; 5-aminolevulinate from L-glutamyl-tRNA(Glu): step 2/2. The chain is Glutamate-1-semialdehyde 2,1-aminomutase from Protochlamydia amoebophila (strain UWE25).